Reading from the N-terminus, the 217-residue chain is Probable GTP-binding protein EngB (217 aa).

The 178-residue stretch at 40–217 (DVPEIAFAGR…RAAVLQDAMG (178 aa)) folds into the EngB-type G domain. Residues 48–55 (GRSNVGKS), 75–79 (GRTQE), 95–98 (DMPG), 162–165 (TKAD), and 196–198 (TSS) contribute to the GTP site. 2 residues coordinate Mg(2+): serine 55 and threonine 77.

Belongs to the TRAFAC class TrmE-Era-EngA-EngB-Septin-like GTPase superfamily. EngB GTPase family. Requires Mg(2+) as cofactor.

Necessary for normal cell division and for the maintenance of normal septation. The polypeptide is Probable GTP-binding protein EngB (Novosphingobium aromaticivorans (strain ATCC 700278 / DSM 12444 / CCUG 56034 / CIP 105152 / NBRC 16084 / F199)).